The following is a 429-amino-acid chain: Histidine--tRNA ligase (429 aa).

This sequence belongs to the class-II aminoacyl-tRNA synthetase family. As to quaternary structure, homodimer.

Its subcellular location is the cytoplasm. It carries out the reaction tRNA(His) + L-histidine + ATP = L-histidyl-tRNA(His) + AMP + diphosphate + H(+). The sequence is that of Histidine--tRNA ligase from Corynebacterium efficiens (strain DSM 44549 / YS-314 / AJ 12310 / JCM 11189 / NBRC 100395).